We begin with the raw amino-acid sequence, 171 residues long: Transcription elongation factor GreB (171 aa).

Positions 53–75 (KKRLREIDRRVRFLAKRLEVLKI) form a coiled coil.

It belongs to the GreA/GreB family. GreB subfamily.

Its function is as follows. Necessary for efficient RNA polymerase transcription elongation past template-encoded arresting sites. The arresting sites in DNA have the property of trapping a certain fraction of elongating RNA polymerases that pass through, resulting in locked ternary complexes. Cleavage of the nascent transcript by cleavage factors such as GreA or GreB allows the resumption of elongation from the new 3'terminus. GreB releases sequences of up to 9 nucleotides in length. In Yersinia pestis, this protein is Transcription elongation factor GreB.